The chain runs to 515 residues: Cytochrome P450 monooxygenase ptmJ (515 aa).

4 consecutive transmembrane segments (helical) span residues 6–26, 50–70, 82–102, and 300–320; these read LGPF…LFVI, LGVV…LFCV, VFYL…EPVV, and VIIL…LFLH. C449 lines the heme pocket.

It belongs to the cytochrome P450 family. Requires heme as cofactor.

It localises to the membrane. It functions in the pathway secondary metabolite biosynthesis. Its function is as follows. Cytochrome P450 monooxygenase; part of the gene cluster that mediates the biosynthesis of the indole diterpenes penitrems. The geranylgeranyl diphosphate (GGPP) synthase ptmG catalyzes the first step in penitrem biosynthesis via conversion of farnesyl pyrophosphate and isopentyl pyrophosphate into geranylgeranyl pyrophosphate (GGPP). Condensation of indole-3-glycerol phosphate with GGPP by the prenyl transferase ptmC then forms 3-geranylgeranylindole (3-GGI). Epoxidation by the FAD-dependent monooxygenase ptmM leads to a epoxidized-GGI that is substrate of the terpene cyclase ptmB for cyclization to yield paspaline. Paspaline is subsequently converted to 13-desoxypaxilline by the cytochrome P450 monooxygenase ptmP, the latter being then converted to paxilline by the cytochrome P450 monooxygenase ptmQ. Paxilline is converted to beta-paxitriol via C-10 ketoreduction by the short-chain dehydrogenase ptmH which can be monoprenylated at the C-20 by the indole diterpene prenyltransferase ptmD. A two-step elimination (acetylation and elimination) process performed by the O-acetyltransferase ptmV and ptmI leads to the production of the prenylated form of penijanthine. The FAD-linked oxidoreductase ptmO then converts the prenylated form of penijanthine into PC-M5 which is in turn transformed into PC-M4 by the aromatic dimethylallyltransferase ptmE. Five sequential oxidative transformations performed by the cytochrome P450 monooxygenases ptmK, ptmU, ptmL, ptmN and ptmJ yield the various penitrem compounds. PtmK, ptmU and ptmM are involved in the formation of the key bicyclic ring of penitrem C via the formation of the intermediates secopenitrem D and penitrem D. PtmL catalyzes the epoxidation of penitrem D and C to yield penitrem B and F, respectively. PtmJ catalyzes the last benzylic hydroxylation to convert penitrem B to prenitrem E and penitrem F to penitrem A. In Penicillium ochrochloron, this protein is Cytochrome P450 monooxygenase ptmJ.